The sequence spans 323 residues: G patch domain-containing protein 4 (323 aa).

Disordered stretches follow at residues 1–32 (MSAS…GLGR), 84–110 (GVKV…SNRN), 124–185 (PGGE…SAKL), and 197–323 (AKYG…NKSE). Composition is skewed to basic and acidic residues over residues 9–32 (SQGR…GLGR) and 84–94 (GVKVNRTKDDD). The G-patch domain occupies 11–57 (GRRFAEQQMHKHGWTEGKGLGRRENGISEAIKVKVKCDHAGVGHNSA). Residues 131-141 (KEPSSSESSDS) are compositionally biased toward low complexity. Acidic residues predominate over residues 252–261 (EREEEEEEES). Basic residues predominate over residues 281–291 (SKKKKSKKKHR). Residues 294 to 306 (SASPQEEQVTEST) are compositionally biased toward polar residues. Residues 311-323 (KPKKKKKKKNKSE) are compositionally biased toward basic residues.

The polypeptide is G patch domain-containing protein 4 (gpatch4) (Xenopus tropicalis (Western clawed frog)).